The chain runs to 288 residues: 33 kDa chaperonin (288 aa).

2 disulfide bridges follow: cysteine 235–cysteine 237 and cysteine 268–cysteine 271.

Belongs to the HSP33 family. Under oxidizing conditions two disulfide bonds are formed involving the reactive cysteines. Under reducing conditions zinc is bound to the reactive cysteines and the protein is inactive.

The protein resides in the cytoplasm. Redox regulated molecular chaperone. Protects both thermally unfolding and oxidatively damaged proteins from irreversible aggregation. Plays an important role in the bacterial defense system toward oxidative stress. The sequence is that of 33 kDa chaperonin from Streptococcus thermophilus (strain ATCC BAA-491 / LMD-9).